Here is a 228-residue protein sequence, read N- to C-terminus: ATP-dependent dethiobiotin synthetase BioD (228 aa).

Residue 13 to 18 (DIGKTF) participates in ATP binding. Mg(2+) is bound at residue threonine 17. Lysine 38 is a catalytic residue. Serine 42 serves as a coordination point for substrate. ATP-binding positions include aspartate 55, 116 to 119 (EGSG), 179 to 180 (NK), and 208 to 210 (PKI). Positions 55 and 116 each coordinate Mg(2+).

This sequence belongs to the dethiobiotin synthetase family. As to quaternary structure, homodimer. Mg(2+) is required as a cofactor.

Its subcellular location is the cytoplasm. It carries out the reaction (7R,8S)-7,8-diammoniononanoate + CO2 + ATP = (4R,5S)-dethiobiotin + ADP + phosphate + 3 H(+). It functions in the pathway cofactor biosynthesis; biotin biosynthesis; biotin from 7,8-diaminononanoate: step 1/2. In terms of biological role, catalyzes a mechanistically unusual reaction, the ATP-dependent insertion of CO2 between the N7 and N8 nitrogen atoms of 7,8-diaminopelargonic acid (DAPA, also called 7,8-diammoniononanoate) to form a ureido ring. The chain is ATP-dependent dethiobiotin synthetase BioD from Clostridium perfringens (strain 13 / Type A).